A 279-amino-acid chain; its full sequence is 2'-N-acetylparomamine deacetylase (279 aa).

Positions 31, 34, and 157 each coordinate Zn(2+). The interval 245-279 (PRRWTGGTAGAGHAAGRRGAPHTERVWTPAPAGAR) is disordered. Residues 246–258 (RRWTGGTAGAGHA) show a composition bias toward low complexity.

It belongs to the PIGL family. It depends on Zn(2+) as a cofactor.

It carries out the reaction 2'-N-acetylparomamine + H2O = paromamine + acetate. It catalyses the reaction 2'''-acetyl-6'''-hydroxyneomycin C + H2O = 6'''-deamino-6'''-hydroxyneomycin C + acetate. It participates in antibiotic biosynthesis; neomycin biosynthesis. Its function is as follows. Deacetylase involved in the biosynthesis of neomycin by mediating 2 steps of the pathway. Deacetylates both 2'-N-acetylparomamine and 2'''-acetyl-6'''-hydroxyneomycin C. This chain is 2'-N-acetylparomamine deacetylase (neoL), found in Streptomyces fradiae (Streptomyces roseoflavus).